The chain runs to 502 residues: Large ribosomal subunit protein uL2m (502 aa).

Positions 458–502 (AMNPVDHPHGGGEGRTKGGRPSVSPWGKPTKAGFRAGVGVGKRRI) are disordered. Residues 463–473 (DHPHGGGEGRT) are compositionally biased toward basic and acidic residues. Over residues 493 to 502 (AGVGVGKRRI) the composition is skewed to gly residues.

It belongs to the universal ribosomal protein uL2 family.

The protein resides in the mitochondrion. In Oryza sativa (Rice), this protein is Large ribosomal subunit protein uL2m (RPL2).